We begin with the raw amino-acid sequence, 155 residues long: Ribonuclease H (155 aa).

The RNase H type-1 domain occupies 1-142; that stretch reads MLKQVEIFTD…CDELARAAAM (142 aa). Positions 10, 48, 70, and 134 each coordinate Mg(2+).

This sequence belongs to the RNase H family. Monomer. Requires Mg(2+) as cofactor.

Its subcellular location is the cytoplasm. The catalysed reaction is Endonucleolytic cleavage to 5'-phosphomonoester.. In terms of biological role, endonuclease that specifically degrades the RNA of RNA-DNA hybrids. The sequence is that of Ribonuclease H from Citrobacter koseri (strain ATCC BAA-895 / CDC 4225-83 / SGSC4696).